The sequence spans 478 residues: Maintenance of telomere capping protein 1 (478 aa).

Residues 1–153 (MSENKNSEAE…LHDPIASISN (153 aa)) form a disordered region. Composition is skewed to basic and acidic residues over residues 77–87 (TDKKGVEKKAP) and 95–124 (AQDEKVEESKENKNSEQDAHGKEKEPQQQE). Residues 125–141 (KEEEEEEEEEEEEEEEE) are compositionally biased toward acidic residues. Ser273 is subject to Phosphoserine. Basic and acidic residues-rich tracts occupy residues 321-336 (QKQQKEADATPDDDRS) and 421-435 (SEERNKSYDQKKQKE). Disordered stretches follow at residues 321–341 (QKQQKEADATPDDDRSSISSN) and 416–448 (TGSTASEERNKSYDQKKQKESEDEDEDDEIIDP). At Ser436 the chain carries Phosphoserine. Positions 436-447 (SEDEDEDDEIID) are enriched in acidic residues.

This sequence belongs to the MTC1 family. Interacts with ribosomes.

The protein localises to the cytoplasm. It is found in the cytoplasmic vesicle. Its subcellular location is the COPI-coated vesicle. In terms of biological role, involved in telomere capping. The sequence is that of Maintenance of telomere capping protein 1 (MTC1) from Saccharomyces cerevisiae (strain ATCC 204508 / S288c) (Baker's yeast).